We begin with the raw amino-acid sequence, 593 residues long: Isocitrate dehydrogenase kinase/phosphatase (593 aa).

ATP is bound by residues 315 to 321 (APGIRGM) and lysine 336. Aspartate 371 is a catalytic residue.

It belongs to the AceK family.

The protein localises to the cytoplasm. The enzyme catalyses L-seryl-[isocitrate dehydrogenase] + ATP = O-phospho-L-seryl-[isocitrate dehydrogenase] + ADP + H(+). Functionally, bifunctional enzyme which can phosphorylate or dephosphorylate isocitrate dehydrogenase (IDH) on a specific serine residue. This is a regulatory mechanism which enables bacteria to bypass the Krebs cycle via the glyoxylate shunt in response to the source of carbon. When bacteria are grown on glucose, IDH is fully active and unphosphorylated, but when grown on acetate or ethanol, the activity of IDH declines drastically concomitant with its phosphorylation. This is Isocitrate dehydrogenase kinase/phosphatase from Salmonella typhi.